The sequence spans 585 residues: Arginine--tRNA ligase (585 aa).

Residues 127–137 (PNTNKPLHVGH) carry the 'HIGH' region motif.

Belongs to the class-I aminoacyl-tRNA synthetase family. Monomer.

The protein resides in the cytoplasm. The catalysed reaction is tRNA(Arg) + L-arginine + ATP = L-arginyl-tRNA(Arg) + AMP + diphosphate. The sequence is that of Arginine--tRNA ligase from Borrelia duttonii (strain Ly).